A 167-amino-acid polypeptide reads, in one-letter code: SsrA-binding protein (167 aa).

The segment covering 139 to 158 has biased composition (basic and acidic residues); that stretch reads QNHDKRDAAKDRDWQRDKQR. Residues 139–167 form a disordered region; the sequence is QNHDKRDAAKDRDWQRDKQRVMRRHNRDA.

It belongs to the SmpB family.

The protein localises to the cytoplasm. Functionally, required for rescue of stalled ribosomes mediated by trans-translation. Binds to transfer-messenger RNA (tmRNA), required for stable association of tmRNA with ribosomes. tmRNA and SmpB together mimic tRNA shape, replacing the anticodon stem-loop with SmpB. tmRNA is encoded by the ssrA gene; the 2 termini fold to resemble tRNA(Ala) and it encodes a 'tag peptide', a short internal open reading frame. During trans-translation Ala-aminoacylated tmRNA acts like a tRNA, entering the A-site of stalled ribosomes, displacing the stalled mRNA. The ribosome then switches to translate the ORF on the tmRNA; the nascent peptide is terminated with the 'tag peptide' encoded by the tmRNA and targeted for degradation. The ribosome is freed to recommence translation, which seems to be the essential function of trans-translation. The chain is SsrA-binding protein from Xanthomonas axonopodis pv. citri (strain 306).